A 210-amino-acid polypeptide reads, in one-letter code: Guanylate kinase (210 aa).

One can recognise a Guanylate kinase-like domain in the interval 6-184; the sequence is GTLYIISAPS…ALQDLKCIIQ (179 aa). 13-20 contributes to the ATP binding site; sequence APSGAGKT.

This sequence belongs to the guanylate kinase family.

It localises to the cytoplasm. The catalysed reaction is GMP + ATP = GDP + ADP. In terms of biological role, essential for recycling GMP and indirectly, cGMP. This Nitrosospira multiformis (strain ATCC 25196 / NCIMB 11849 / C 71) protein is Guanylate kinase.